Consider the following 34-residue polypeptide: MEVNILAFIATALFISIPTAFLLIPYVQTATQSN.

A helical membrane pass occupies residues 5–25; that stretch reads ILAFIATALFISIPTAFLLIP.

The protein belongs to the PsbM family. As to quaternary structure, PSII is composed of 1 copy each of membrane proteins PsbA, PsbB, PsbC, PsbD, PsbE, PsbF, PsbH, PsbI, PsbJ, PsbK, PsbL, PsbM, PsbT, PsbX, PsbY, PsbZ, Psb30/Ycf12, at least 3 peripheral proteins of the oxygen-evolving complex and a large number of cofactors. It forms dimeric complexes.

Its subcellular location is the plastid. It localises to the chloroplast thylakoid membrane. Functionally, one of the components of the core complex of photosystem II (PSII). PSII is a light-driven water:plastoquinone oxidoreductase that uses light energy to abstract electrons from H(2)O, generating O(2) and a proton gradient subsequently used for ATP formation. It consists of a core antenna complex that captures photons, and an electron transfer chain that converts photonic excitation into a charge separation. This subunit is found at the monomer-monomer interface. The protein is Photosystem II reaction center protein M of Psilotum nudum (Whisk fern).